Consider the following 357-residue polypeptide: MNTLFMHCRPGFEGEVCSEISDHAACLDVAGYAKARPDTACAEFICTEADGAERLMNGQRFDALIFPRQWARGMFLELPETDRISVILAQLSAFPACGSLWLEVVDTNDGKELSNFCKKFEAPLRKALMQAGKLVDDPRKPRLLLTFKSGREVFLGLADADNSAMWPMGIPRLKFPREAPSRSTLKLEEAWHHFIPRDQWDERLSGDMTGVDLGAAPGGWTYQLVRRGMLVTAIDNGPMAESLMDTGLVQHLMADGFTYKPRHPVDWMVCDIVEKPARNAALLETWLGEGLCREAVVNLKLPMKQRYAEVRRLLDRIEEGFQARGVRVSIGCKQLYHDREEVTCHLRRLDVAKAATK.

Residues serine 183, 216 to 219 (APGG), aspartate 235, aspartate 255, and aspartate 271 contribute to the S-adenosyl-L-methionine site. The Proton acceptor role is filled by lysine 300.

It belongs to the class I-like SAM-binding methyltransferase superfamily. RNA methyltransferase RlmE family. RlmM subfamily. Monomer.

Its subcellular location is the cytoplasm. The catalysed reaction is cytidine(2498) in 23S rRNA + S-adenosyl-L-methionine = 2'-O-methylcytidine(2498) in 23S rRNA + S-adenosyl-L-homocysteine + H(+). Catalyzes the 2'-O-methylation at nucleotide C2498 in 23S rRNA. This is Ribosomal RNA large subunit methyltransferase M from Pseudomonas savastanoi pv. phaseolicola (strain 1448A / Race 6) (Pseudomonas syringae pv. phaseolicola (strain 1448A / Race 6)).